The chain runs to 272 residues: NH(3)-dependent NAD(+) synthetase (272 aa).

45–52 (GISGGQDS) provides a ligand contact to ATP. Position 51 (Asp-51) interacts with Mg(2+). Arg-138 is a deamido-NAD(+) binding site. Residue Thr-158 coordinates ATP. Position 163 (Glu-163) interacts with Mg(2+). Residues Lys-171 and Asp-178 each contribute to the deamido-NAD(+) site. ATP contacts are provided by Lys-187 and Thr-209. 258-259 (HK) lines the deamido-NAD(+) pocket.

It belongs to the NAD synthetase family. As to quaternary structure, homodimer.

It catalyses the reaction deamido-NAD(+) + NH4(+) + ATP = AMP + diphosphate + NAD(+) + H(+). The protein operates within cofactor biosynthesis; NAD(+) biosynthesis; NAD(+) from deamido-NAD(+) (ammonia route): step 1/1. In terms of biological role, catalyzes the ATP-dependent amidation of deamido-NAD to form NAD. Uses ammonia as a nitrogen source. The protein is NH(3)-dependent NAD(+) synthetase of Bacillus cereus (strain G9842).